Reading from the N-terminus, the 169-residue chain is Crossover junction endodeoxyribonuclease RuvC (169 aa).

Catalysis depends on residues D11, E71, and D143. D11, E71, and D143 together coordinate Mg(2+).

It belongs to the RuvC family. Homodimer which binds Holliday junction (HJ) DNA. The HJ becomes 2-fold symmetrical on binding to RuvC with unstacked arms; it has a different conformation from HJ DNA in complex with RuvA. In the full resolvosome a probable DNA-RuvA(4)-RuvB(12)-RuvC(2) complex forms which resolves the HJ. The cofactor is Mg(2+).

The protein localises to the cytoplasm. The catalysed reaction is Endonucleolytic cleavage at a junction such as a reciprocal single-stranded crossover between two homologous DNA duplexes (Holliday junction).. The RuvA-RuvB-RuvC complex processes Holliday junction (HJ) DNA during genetic recombination and DNA repair. Endonuclease that resolves HJ intermediates. Cleaves cruciform DNA by making single-stranded nicks across the HJ at symmetrical positions within the homologous arms, yielding a 5'-phosphate and a 3'-hydroxyl group; requires a central core of homology in the junction. The consensus cleavage sequence is 5'-(A/T)TT(C/G)-3'. Cleavage occurs on the 3'-side of the TT dinucleotide at the point of strand exchange. HJ branch migration catalyzed by RuvA-RuvB allows RuvC to scan DNA until it finds its consensus sequence, where it cleaves and resolves the cruciform DNA. This Rhizobium johnstonii (strain DSM 114642 / LMG 32736 / 3841) (Rhizobium leguminosarum bv. viciae) protein is Crossover junction endodeoxyribonuclease RuvC.